Consider the following 622-residue polypeptide: Mitochondrial Rho GTPase 2 (622 aa).

Residues 1–596 (MRRDVRILLL…ELHPTPFWLR (596 aa)) lie on the Cytoplasmic side of the membrane. The region spanning 2-168 (RRDVRILLLG…FYYAQKAVLH (167 aa)) is the Miro 1 domain. GTP-binding residues include G16, K17, T18, and S19. Residue T18 participates in Mg(2+) binding. D57 serves as a coordination point for Mg(2+). S59 serves as a coordination point for GTP. A Glycyl lysine isopeptide (Lys-Gly) (interchain with G-Cter in ubiquitin) cross-link involves residue K96. GTP is bound by residues N118, K119, D121, A149, and K150. K119 is covalently cross-linked (Glycyl lysine isopeptide (Lys-Gly) (interchain with G-Cter in ubiquitin)). A Glycyl lysine isopeptide (Lys-Gly) (interchain with G-Cter in ubiquitin) cross-link involves residue K164. EF-hand domains lie at 184–219 (ACAQALTRIFRLSDQDLDHALSDKELNAFQKSCFGH) and 304–339 (RGYQFVQRVFEKHDQDHDGVLSPTELESLFSVFSVA). Residues D197, D199, D201, E208, D317, D319, D321, and E328 each coordinate Ca(2+). In terms of domain architecture, Miro 2 spans 415 to 580 (RSVLMCKVLG…FTQLATMATF (166 aa)). GTP-binding residues include G427, G429, K430, S431, and A432. S431 contacts Mg(2+). E475 contacts Mg(2+). Positions 529, 531, and 560 each coordinate GTP. A helical; Anchor for type IV membrane protein transmembrane segment spans residues 597 to 619 (GVLVAVGTAVAAVLSFSLYRVLV). The Mitochondrial intermembrane segment spans residues 620 to 622 (KSR).

The protein belongs to the mitochondrial Rho GTPase family. In terms of assembly, homodimer. Interacts with the kinesin-binding proteins TRAK1/OIP106 and TRAK2/GRIF1, forming a link between mitochondria and the trafficking apparatus of the microtubules. Interacts with ARMCX3. Found in a complex with KIF5B, OGT, RHOT1 and TRAK1. In terms of processing, ubiquitinated by PRKN in a PINK1-dependent manner, leading to its degradation.

The protein resides in the mitochondrion outer membrane. The catalysed reaction is GTP + H2O = GDP + phosphate + H(+). It carries out the reaction ATP + H2O = ADP + phosphate + H(+). The enzyme catalyses UTP + H2O = UDP + phosphate + H(+). Functionally, atypical mitochondrial nucleoside-triphosphatase (NTPase) involved in mitochondrial trafficking. Probably involved in control of anterograde transport of mitochondria and their subcellular distribution. Can hydrolyze GTP, ATP and UTP. The protein is Mitochondrial Rho GTPase 2 (Rhot2) of Rattus norvegicus (Rat).